The chain runs to 282 residues: MNMAESHLDPSKLATGPAGAGAATGQRPLAPLNAKIEVKNLNFFYNQFHALKNINLSIPEGKVTAFIGPSGCGKSTLLRTFNKMYALYPEQRAEGEIVMDGENLLQSKLDISLLRARIGMVFQKPTPFPMSIYDNIAFGVKMFERLTRSEMDDRVEWALTKAALWNEVKDKLSQSGYGLSGGQQQRLCIARGIAIRPEVLLLDEPCSALDPISTGRIEELIAELKSDYTVVIVTHNMQQAARCSDYTAYMYLGELIEFGETEKIFIKPARKETEDYITGRFG.

Residues 1-10 (MNMAESHLDP) show a composition bias toward basic and acidic residues. Residues 1 to 24 (MNMAESHLDPSKLATGPAGAGAAT) form a disordered region. Residues 14–24 (ATGPAGAGAAT) show a composition bias toward low complexity. Positions 36–277 (IEVKNLNFFY…PARKETEDYI (242 aa)) constitute an ABC transporter domain. Residue 68–75 (GPSGCGKS) coordinates ATP.

This sequence belongs to the ABC transporter superfamily. Phosphate importer (TC 3.A.1.7) family. In terms of assembly, the complex is composed of two ATP-binding proteins (PstB), two transmembrane proteins (PstC and PstA) and a solute-binding protein (PstS).

It is found in the cell inner membrane. The enzyme catalyses phosphate(out) + ATP + H2O = ADP + 2 phosphate(in) + H(+). Part of the ABC transporter complex PstSACB involved in phosphate import. Responsible for energy coupling to the transport system. This chain is Phosphate import ATP-binding protein PstB, found in Burkholderia thailandensis (strain ATCC 700388 / DSM 13276 / CCUG 48851 / CIP 106301 / E264).